An 816-amino-acid polypeptide reads, in one-letter code: uncharacterized protein (816 aa).

Disordered regions lie at residues 1-34 (MLFNINRQEDDPFTQLINQSSANTQNQQAHQQES), 65-101 (RQNNRAYGEDAKNRKFPTVSATSAYSKQQPKDLGYKN), 154-406 (DEKD…ENPE), and 770-816 (RQHK…VMYA). Over residues 18–32 (NQSSANTQNQQAHQQ) the composition is skewed to low complexity. A compositionally biased stretch (polar residues) spans 83 to 92 (VSATSAYSKQ). Positions 161 to 223 (TTTSSSTSTS…STSTTSTSTT (63 aa)) are enriched in low complexity. Residues 246-260 (ESTSIGKGTADSAQI) show a composition bias toward polar residues. Ser-286 carries the phosphoserine modification. The segment covering 292 to 316 (DEQKEEKSDVKKVNPPSGEEKKEVE) has biased composition (basic and acidic residues). The span at 317–326 (AEGDAEEETE) shows a compositional bias: acidic residues. A compositionally biased stretch (low complexity) spans 327–342 (QSSAEESAERTSTPET). Residues Ser-343 and Ser-347 each carry the phosphoserine modification. Acidic residues predominate over residues 343–353 (SEPESEEDESP). The span at 380–396 (KSPTSSSTQKSKTAAPS) shows a compositional bias: low complexity. Basic and acidic residues-rich tracts occupy residues 770 to 792 (RQHKQAEGIHAAENHKIPNDRSQ) and 799 to 816 (PKDDSLYEYHTEEDVMYA). The residue at position 809 (Thr-809) is a Phosphothreonine.

Pyrophosphorylated by 5-diphosphoinositol pentakisphosphate (5-IP7). Serine pyrophosphorylation is achieved by Mg(2+)-dependent, but enzyme independent transfer of a beta-phosphate from a inositol pyrophosphate to a pre-phosphorylated serine residue.

This is an uncharacterized protein from Saccharomyces cerevisiae (strain ATCC 204508 / S288c) (Baker's yeast).